An 87-amino-acid chain; its full sequence is Large ribosomal subunit protein bL27 (87 aa).

Residues 1 to 25 (MAHKKGASSSRNGRDSNAQRLGVKR) are disordered. Polar residues predominate over residues 7–19 (ASSSRNGRDSNAQ).

It belongs to the bacterial ribosomal protein bL27 family.

The polypeptide is Large ribosomal subunit protein bL27 (Rhodococcus opacus (strain B4)).